The primary structure comprises 428 residues: Chaperone SurA (428 aa).

Positions 1-20 (MKNWKTLLLGIAMIANTSFA) are cleaved as a signal peptide. 2 consecutive PpiC domains span residues 171–272 (STEL…KVND) and 282–382 (VTEV…ELLD).

It is found in the periplasm. The catalysed reaction is [protein]-peptidylproline (omega=180) = [protein]-peptidylproline (omega=0). Its function is as follows. Chaperone involved in the correct folding and assembly of outer membrane proteins. Recognizes specific patterns of aromatic residues and the orientation of their side chains, which are found more frequently in integral outer membrane proteins. May act in both early periplasmic and late outer membrane-associated steps of protein maturation. The sequence is that of Chaperone SurA from Shigella dysenteriae serotype 1 (strain Sd197).